The primary structure comprises 274 residues: 2,3,4,5-tetrahydropyridine-2,6-dicarboxylate N-succinyltransferase (274 aa).

Belongs to the transferase hexapeptide repeat family.

It is found in the cytoplasm. It catalyses the reaction (S)-2,3,4,5-tetrahydrodipicolinate + succinyl-CoA + H2O = (S)-2-succinylamino-6-oxoheptanedioate + CoA. Its pathway is amino-acid biosynthesis; L-lysine biosynthesis via DAP pathway; LL-2,6-diaminopimelate from (S)-tetrahydrodipicolinate (succinylase route): step 1/3. The chain is 2,3,4,5-tetrahydropyridine-2,6-dicarboxylate N-succinyltransferase from Klebsiella pneumoniae (strain 342).